The following is a 490-amino-acid chain: UDP-glycosyltransferase 84A1 (490 aa).

His30 functions as the Proton acceptor in the catalytic mechanism. His30 contacts an anthocyanidin. 6 residues coordinate UDP-alpha-D-glucose: Gln358, His373, Trp376, Asn377, Ser378, and Glu381. An an anthocyanidin-binding site is contributed by Gly396. UDP-alpha-D-glucose-binding residues include Asp397 and Gln398.

The protein belongs to the UDP-glycosyltransferase family. As to expression, expressed in roots, flowers and siliques.

The catalysed reaction is (E)-4-coumarate + UDP-alpha-D-glucose = 4-O-(beta-D-glucosyl)-trans-4-coumarate + UDP + H(+). It carries out the reaction (E)-ferulate + UDP-alpha-D-glucose = 1-O-[(E)-feruloyl]-beta-D-glucose + UDP. The enzyme catalyses (E)-caffeate + UDP-alpha-D-glucose = 1-O-[(E)-caffeoyl]-beta-D-glucose + UDP. It catalyses the reaction (E)-sinapate + UDP-alpha-D-glucose = 1-O-(trans-sinapoyl)-beta-D-glucose + UDP. The catalysed reaction is (E)-cinnamate + UDP-alpha-D-glucose = 1-O-(trans-cinnamoyl)-beta-D-glucose + UDP. In terms of biological role, UDP-glucosyltransferase that forms glucose esters with phenylpropanoids. Glucosylates 4-coumarate, ferulate, caffeate, sinapate and cinnamate. Can glucosylate the phytotoxic xenobiotic compound 2,4,5-trichlorophenol (TCP). This chain is UDP-glycosyltransferase 84A1, found in Arabidopsis thaliana (Mouse-ear cress).